A 347-amino-acid chain; its full sequence is Phenylalanine--tRNA ligase alpha subunit (347 aa).

Glu-265 contacts Mg(2+).

It belongs to the class-II aminoacyl-tRNA synthetase family. Phe-tRNA synthetase alpha subunit type 1 subfamily. In terms of assembly, tetramer of two alpha and two beta subunits. Mg(2+) is required as a cofactor.

It localises to the cytoplasm. The enzyme catalyses tRNA(Phe) + L-phenylalanine + ATP = L-phenylalanyl-tRNA(Phe) + AMP + diphosphate + H(+). The sequence is that of Phenylalanine--tRNA ligase alpha subunit from Mycolicibacterium vanbaalenii (strain DSM 7251 / JCM 13017 / BCRC 16820 / KCTC 9966 / NRRL B-24157 / PYR-1) (Mycobacterium vanbaalenii).